The chain runs to 111 residues: Cytochrome c 2.1 (111 aa).

Ser2 is subject to N-acetylserine. Heme c is bound by residues Cys20, Cys23, His24, and Met85.

Belongs to the cytochrome c family. Binds 1 heme c group covalently per subunit.

Its subcellular location is the mitochondrion intermembrane space. In terms of biological role, electron carrier protein. The oxidized form of the cytochrome c heme group can accept an electron from the heme group of the cytochrome c1 subunit of cytochrome reductase. Cytochrome c then transfers this electron to the cytochrome oxidase complex, the final protein carrier in the mitochondrial electron-transport chain. The chain is Cytochrome c 2.1 (cyc-2.1) from Caenorhabditis elegans.